The chain runs to 219 residues: MKDTDIKRLLYTNLLCVFSIFLSIFIPSFFVDNFSVLEAHLTWLCICSASVTTVNLLSYLVVKPNVSSKRSSLSHKVTRALKCCVCFLMSCFLLHIIFVLYGAPLIELVLETFLFAVVLSTFTTVPCLCLLGPNLKAWLRVFSRNGVTSIWENSLQITTISSFTGAWLGAFPIPLDWERPWQVWPISCTLGATFGYVAGLVISPLWIYWNRKQLTYKNN.

The next 6 membrane-spanning stretches (helical) occupy residues Tyr-11 to Val-31, Thr-42 to Val-62, Cys-86 to Ile-106, Phe-113 to Pro-133, Leu-155 to Leu-175, and Thr-189 to Trp-209.

It belongs to the PIGF family. As to quaternary structure, part of the ethanolamine phosphate transferase 3 complex composed by PIGO and PIGF. Part of the ethanolamine phosphate transferase 2 complex with PIGG. PIGF is required to stabilize PIGG and PIGO.

It localises to the endoplasmic reticulum membrane. It functions in the pathway glycolipid biosynthesis; glycosylphosphatidylinositol-anchor biosynthesis. Stabilizing subunit of the ethanolamine phosphate transferase 3 and ethanolamine phosphate transferase 2 complexes that sequentially transfer an ethanolamine phosphate (EtNP) from a phosphatidylethanolamine (PE) to the 6-OH position of the third alpha-1,2-linked mannose and the second alpha-1,6-linked mannose of the alpha-D-Man-(1-&gt;2)-alpha-D-Man-(1-&gt;6)-2-PEtn-alpha-D-Man-(1-&gt;4)-alpha-D-GlcN-(1-&gt;6)-(1-radyl,2-acyl-sn-glycero-3-phospho)-2-acyl-inositol (also termed H6) intermediate to generate a 6-PEtn-alpha-D-Man-(1-&gt;2)-6-PEtn-alpha-D-Man-(1-&gt;6)-2-PEtn-alpha-D-Man-(1-&gt;4)-alpha-D-GlcN-(1-&gt;6)-(1-radyl,2-acyl-sn-glycero-3-phospho)-2-acyl-inositol (also termed H8). Participates in the tenth and eleventh steps of the glycosylphosphatidylinositol-anchor biosynthesis, in association with PIGO and PIGG, respectively. This chain is GPI ethanolamine phosphate transferase, stabilizing subunit, found in Mus musculus (Mouse).